Consider the following 61-residue polypeptide: Photosystem II reaction center X protein (61 aa).

A helical membrane pass occupies residues 26–46 (IGSFIAAALLIVIPATAFLIF).

The protein belongs to the PsbX family. Type 2 subfamily. In terms of assembly, PSII consists of a core antenna complex that captures photons, and an electron transfer chain that converts photonic excitation into a charge separation. PSII forms dimeric complexes.

The protein localises to the cellular thylakoid membrane. Functionally, involved in the binding and/or turnover of quinones at the Q(B) site of Photosystem II. This is Photosystem II reaction center X protein from Prochlorococcus marinus (strain MIT 9215).